A 789-amino-acid chain; its full sequence is SWI5-dependent HO expression protein 4 (789 aa).

Residue Ser-18 is modified to Phosphoserine.

Its subcellular location is the cytoplasm. Required for mother cell-specific ho expression. Might be required for the transport of factors (such as ASH1) that promote HO repression from the mother cell into its bud. This is SWI5-dependent HO expression protein 4 (SHE4) from Saccharomyces cerevisiae (strain ATCC 204508 / S288c) (Baker's yeast).